The sequence spans 125 residues: Snaclec alboaggregin-A subunit beta (125 aa).

The region spanning 1-125 (GFDCPFGWSS…TRYPVCKFXG (125 aa)) is the C-type lectin domain. 3 cysteine pairs are disulfide-bonded: cysteine 4–cysteine 15, cysteine 32–cysteine 121, and cysteine 98–cysteine 113.

Belongs to the snaclec family. Heterotetramer of the subunits alpha, alpha', beta and beta'; disulfide-linked. In terms of tissue distribution, expressed by the venom gland.

Its subcellular location is the secreted. Potent platelet activator that aggregates platelets via both GPIbalpha (GP1BA) and GPVI (GP6). Induces a tyrosine phosphorylation profile in platelets that resembles this produced by collagen, involving the time dependent tyrosine phosphorylation of Fc receptor gamma chain (FCGR1A), phospholipase Cgamma2 (PLCG2), and LAT. This is Snaclec alboaggregin-A subunit beta from Trimeresurus albolabris (White-lipped pit viper).